The sequence spans 331 residues: MEAKPVAIWLFLCSLMVICMVGIGGFTRLSKAGLSITEWKPITGTLPPLSEQDWLKEKSKYEATPEYKAFNYGMSMEEFRTIYLIEYVHRLIARLTGLVFILPFIYFTLKKRIPKNAVIRLSTALLFGILQAFAGWYMVKSGLVSNPHVSHYKLALHLLLALVIFALLSYQFFDYQIKPKQIIKINSNITCYIWIILILVTVQIIFGAFVAGLNAGLIYNTFPLMDGQIVPEDLFYLQPAWLNIFENRVTVQFIHRALALLILVLTAILTIKNASIKPLYVMLFSVIIQVILGIVTLLLHIPMAIAIAHQMFSFILFGSGLYCLRYLRNQI.

Transmembrane regions (helical) follow at residues 6 to 26 (VAIW…IGGF), 87 to 107 (YVHR…FIYF), 124 to 144 (ALLF…SGLV), 154 to 174 (LALH…QFFD), 193 to 213 (IWII…VAGL), 251 to 271 (VQFI…ILTI), 279 to 299 (LYVM…TLLL), and 301 to 321 (IPMA…GSGL). Residue His255 coordinates heme. Position 309 (His309) interacts with heme.

It belongs to the COX15/CtaA family. Type 2 subfamily. As to quaternary structure, interacts with CtaB. Heme b is required as a cofactor.

Its subcellular location is the cell membrane. The catalysed reaction is Fe(II)-heme o + 2 A + H2O = Fe(II)-heme a + 2 AH2. Its pathway is porphyrin-containing compound metabolism; heme A biosynthesis; heme A from heme O: step 1/1. Its function is as follows. Catalyzes the conversion of heme O to heme A by two successive hydroxylations of the methyl group at C8. The first hydroxylation forms heme I, the second hydroxylation results in an unstable dihydroxymethyl group, which spontaneously dehydrates, resulting in the formyl group of heme A. The protein is Heme A synthase of Wolbachia pipientis subsp. Culex pipiens (strain wPip).